The chain runs to 212 residues: 2-hydroxychromene-2-carboxylate isomerase (212 aa).

The Nucleophile role is filled by serine 24. Serine 24 serves as a coordination point for glutathione. Residues lysine 56, asparagine 66–arginine 67, and tyrosine 97 contribute to the substrate site. Residues valine 181 and tryptophan 192–aspartate 195 each bind glutathione.

This sequence belongs to the GST superfamily. NadH family. Glutathione is required as a cofactor.

The catalysed reaction is 2-hydroxychromene-2-carboxylate = (3E)-4-(2-hydroxyphenyl)-2-oxobut-3-enoate. Its pathway is aromatic compound metabolism; naphthalene degradation. Its function is as follows. Involved in the naphthalene catabolic pathway. Catalyzes the reversible glutathione-dependent isomerization of 2-hydroxychromene-2-carboxylate (HCCA) to trans-O-hydroxybenzylidenepyruvate (THBPA). This Pseudomonas sp. (strain C18) protein is 2-hydroxychromene-2-carboxylate isomerase (doxJ).